Consider the following 574-residue polypeptide: Zinc finger and BTB domain-containing protein 3 (574 aa).

The region spanning 74–142 is the BTB domain; the sequence is CDCTVMVGST…MYAGQLTLRG (69 aa). 2 disordered regions span residues 175-277 and 305-346; these read AEAD…SSTE and SLRV…APAP. Residues Lys181 and Lys182 each participate in a glycyl lysine isopeptide (Lys-Gly) (interchain with G-Cter in SUMO2) cross-link. Positions 187–212 are enriched in polar residues; sequence NSQLPSLEFLSSTSRGTQPSLASAET. A compositionally biased stretch (low complexity) spans 323-334; it reads PPASAPTSAPAP. Phosphoserine is present on Ser362. Residues 364 to 403 form a disordered region; sequence EETDVSDEQPQGPERAFPSGGAVYGAQPSQPEAFEDPGAA. 2 consecutive C2H2-type zinc fingers follow at residues 472 to 494 and 500 to 523; these read PTCK…ATVH and YECR…RKAH. Basic and acidic residues predominate over residues 526-535; sequence DLAKRSKPDP. The disordered stretch occupies residues 526–574; the sequence is DLAKRSKPDPEVGPLLGVQPLPGSPTADRQSSSGGGPPKDFVLAPKTNI. Residue Lys532 forms a Glycyl lysine isopeptide (Lys-Gly) (interchain with G-Cter in SUMO2) linkage. A Phosphoserine modification is found at Ser549.

It is found in the nucleus. May be involved in transcriptional regulation. This Homo sapiens (Human) protein is Zinc finger and BTB domain-containing protein 3 (ZBTB3).